The primary structure comprises 246 residues: Nodulation protein G (246 aa).

8-32 (VTGAMGGLGTAICQALAKDGCIVAA) is an NAD(+) binding site. A substrate-binding site is contributed by Ser-140. Tyr-153 acts as the Proton acceptor in catalysis.

The protein belongs to the short-chain dehydrogenases/reductases (SDR) family.

Proposed to modify Nod factor fatty acyl chain. This Azospirillum brasilense protein is Nodulation protein G (nodG).